The sequence spans 132 residues: Fatty acid-binding protein (132 aa).

(5Z,8Z,11Z,14Z)-eicosatetraenoate contacts are provided by residues Arg107 and 127–129 (RNY). Residues Arg107 and 127-129 (RNY) contribute to the (9Z)-octadecenoate site.

Belongs to the calycin superfamily. Fatty-acid binding protein (FABP) family.

It localises to the cytoplasm. In terms of biological role, may play a role in the transport of fatty acids. Binds to various fatty acids but not retinoids. In Schistosoma japonicum (Blood fluke), this protein is Fatty acid-binding protein.